Consider the following 310-residue polypeptide: 4-hydroxyproline 2-epimerase (310 aa).

Cys88 acts as the Proton acceptor in catalysis. Substrate-binding positions include 89 to 90 (GH), His208, and Asp232. Cys236 (proton donor) is an active-site residue. A substrate-binding site is contributed by 237–238 (GT).

It belongs to the proline racemase family.

It carries out the reaction trans-4-hydroxy-L-proline = cis-4-hydroxy-D-proline. Catalyzes the epimerization of trans-4-hydroxy-L-proline (t4LHyp) to cis-4-hydroxy-D-proline (c4DHyp). Is likely involved in a degradation pathway that converts t4LHyp to alpha-ketoglutarate. Displays no proline racemase activity. This Acinetobacter baumannii (strain AYE) protein is 4-hydroxyproline 2-epimerase.